A 102-amino-acid chain; its full sequence is MAKEKIRIRLKAYDHRILDQSAEKIVETAKRSGAKVSGPIPLPTERTVYTILRAVHKYKDSREQFEMRTHKRLIDIINPTPQTVDSLMRLDLPSGVDIEIKL.

This sequence belongs to the universal ribosomal protein uS10 family. Part of the 30S ribosomal subunit.

Its function is as follows. Involved in the binding of tRNA to the ribosomes. The chain is Small ribosomal subunit protein uS10 from Geobacillus kaustophilus (strain HTA426).